The primary structure comprises 221 residues: Potassium voltage-gated channel subfamily E member 4 (221 aa).

Over 1 to 86 (MHFLTIYPNC…AGGGSGNGNE (86 aa)) the chain is Extracellular. N-linked (GlcNAc...) asparagine glycosylation occurs at N9. A compositionally biased stretch (polar residues) spans 58 to 72 (LNSTHPGTAASSSPL). The disordered stretch occupies residues 58 to 77 (LNSTHPGTAASSSPLESRAA). A helical transmembrane segment spans residues 87 to 107 (YFYILVVMSFYGIFLIGIMLG). Topologically, residues 108-221 (YMKSKRREKK…GSSENIHQNS (114 aa)) are cytoplasmic. The tract at residues 175 to 221 (SVSSESSSPDVHLTIQEEGADDELEETSETPLNESSEGSSENIHQNS) is disordered. Acidic residues predominate over residues 192–202 (EGADDELEETS). The segment covering 203-221 (ETPLNESSEGSSENIHQNS) has biased composition (polar residues).

Belongs to the potassium channel KCNE family. Forms heterooligomers with KCNA3, inhibiting its activity by impairing localization to the cell membrane. The stoichiometry of KCNA3 and KCNE4 in the heterooligomers are 4:1, 4:2, 4:3 or 4:4 respectively. Increasing the number of KCNE4 subunits steadily slows the activation KCNA3 and decreases its abundance at the cell membrane. However, a single subunit of KCNE4 is sufficient for the cooperative enhancement of the inactivating function of the channel. However, a single subunit of KCNE4 is sufficient for the cooperative enhancement of the inactivating function of the channel. Interacts with KCNQ1; impairs KCNQ1 localization in lipid rafts and inhibits voltage-gated potassium channel activity. In terms of tissue distribution, predominantly expressed in embryo and adult uterus. Low expression found in kidney, small intestine, lung and heart. Detected in kidney, thymus, and uterus (at protein level).

It localises to the membrane. In terms of biological role, ancillary protein that functions as a regulatory subunit of the voltage-gated potassium (Kv) channel complex composed of pore-forming and potassium-conducting alpha subunits and of regulatory beta subunits. KCNE4 beta subunit modulates the gating kinetics and enhances stability of the channel complex. Associates with KCNQ1/KVLTQ1 alpha subunit to inhibit potassium currents. Its function is as follows. May inhibit KCNQ4-mediated potassium currents. The chain is Potassium voltage-gated channel subfamily E member 4 from Homo sapiens (Human).